The following is a 413-amino-acid chain: 2,3-bisphosphoglycerate-independent phosphoglycerate mutase (413 aa).

Belongs to the BPG-independent phosphoglycerate mutase family. A-PGAM subfamily.

The catalysed reaction is (2R)-2-phosphoglycerate = (2R)-3-phosphoglycerate. It participates in carbohydrate degradation; glycolysis; pyruvate from D-glyceraldehyde 3-phosphate: step 3/5. Catalyzes the interconversion of 2-phosphoglycerate and 3-phosphoglycerate. The chain is 2,3-bisphosphoglycerate-independent phosphoglycerate mutase from Sulfurisphaera tokodaii (strain DSM 16993 / JCM 10545 / NBRC 100140 / 7) (Sulfolobus tokodaii).